A 224-amino-acid chain; its full sequence is Ribonuclease T (224 aa).

An Exonuclease domain is found at 20–195 (VVIDVETAGF…YDTQKTAELF (176 aa)). Asp-23, Glu-25, His-182, and Asp-187 together coordinate Mg(2+). The active-site Proton donor/acceptor is the His-182.

This sequence belongs to the RNase T family. As to quaternary structure, homodimer. Mg(2+) serves as cofactor.

In terms of biological role, trims short 3' overhangs of a variety of RNA species, leaving a one or two nucleotide 3' overhang. Responsible for the end-turnover of tRNA: specifically removes the terminal AMP residue from uncharged tRNA (tRNA-C-C-A). Also appears to be involved in tRNA biosynthesis. This Vibrio cholerae serotype O1 (strain ATCC 39315 / El Tor Inaba N16961) protein is Ribonuclease T.